A 362-amino-acid polypeptide reads, in one-letter code: Dihydroorotate dehydrogenase (quinone) (362 aa).

FMN contacts are provided by residues 62–66 and Thr86; that span reads AGYDK. Lys66 lines the substrate pocket. 111–115 is a binding site for substrate; sequence NRLGF. Asn139 and Asn170 together coordinate FMN. Residue Asn170 coordinates substrate. The active-site Nucleophile is the Ser173. A substrate-binding site is contributed by Asn175. FMN contacts are provided by Lys215 and Ser243. A substrate-binding site is contributed by 244-245; that stretch reads NT. FMN-binding positions include Gly266, Gly295, and 316-317; that span reads YS.

The protein belongs to the dihydroorotate dehydrogenase family. Type 2 subfamily. As to quaternary structure, monomer. Requires FMN as cofactor.

The protein resides in the cell membrane. The enzyme catalyses (S)-dihydroorotate + a quinone = orotate + a quinol. It participates in pyrimidine metabolism; UMP biosynthesis via de novo pathway; orotate from (S)-dihydroorotate (quinone route): step 1/1. Functionally, catalyzes the conversion of dihydroorotate to orotate with quinone as electron acceptor. In Sinorhizobium medicae (strain WSM419) (Ensifer medicae), this protein is Dihydroorotate dehydrogenase (quinone).